The sequence spans 350 residues: Peroxidase 24 (350 aa).

Residues 1 to 27 form the signal peptide; the sequence is MANKSLEIRFLFPLVLFLVVKLLCVDG. Intrachain disulfides connect Cys55/Cys135, Cys88/Cys93, Cys141/Cys346, and Cys221/Cys253. The N-linked (GlcNAc...) asparagine glycan is linked to Asn73. The active-site Proton acceptor is the His86. 5 residues coordinate Ca(2+): Asp87, Val90, Gly92, Asp94, and Ser96. Residue Pro184 participates in substrate binding. Asn189 carries N-linked (GlcNAc...) asparagine glycosylation. His214 is a binding site for heme b. Thr215 is a Ca(2+) binding site. Asn230 is a glycosylation site (N-linked (GlcNAc...) asparagine). Residues Asp269 and Asp277 each contribute to the Ca(2+) site.

It belongs to the peroxidase family. Classical plant (class III) peroxidase subfamily. The cofactor is heme b. Ca(2+) serves as cofactor.

The protein localises to the secreted. It carries out the reaction 2 a phenolic donor + H2O2 = 2 a phenolic radical donor + 2 H2O. In terms of biological role, removal of H(2)O(2), oxidation of toxic reductants, biosynthesis and degradation of lignin, suberization, auxin catabolism, response to environmental stresses such as wounding, pathogen attack and oxidative stress. These functions might be dependent on each isozyme/isoform in each plant tissue. In Arabidopsis thaliana (Mouse-ear cress), this protein is Peroxidase 24 (PER24).